A 643-amino-acid chain; its full sequence is 1-deoxy-D-xylulose-5-phosphate synthase (643 aa).

Thiamine diphosphate contacts are provided by residues histidine 72 and 113-115; that span reads GHA. Aspartate 144 is a Mg(2+) binding site. Thiamine diphosphate is bound by residues 145-146, asparagine 174, tyrosine 287, and glutamate 370; that span reads GA. Asparagine 174 contributes to the Mg(2+) binding site.

Belongs to the transketolase family. DXPS subfamily. As to quaternary structure, homodimer. The cofactor is Mg(2+). Thiamine diphosphate is required as a cofactor.

It catalyses the reaction D-glyceraldehyde 3-phosphate + pyruvate + H(+) = 1-deoxy-D-xylulose 5-phosphate + CO2. It functions in the pathway metabolic intermediate biosynthesis; 1-deoxy-D-xylulose 5-phosphate biosynthesis; 1-deoxy-D-xylulose 5-phosphate from D-glyceraldehyde 3-phosphate and pyruvate: step 1/1. In terms of biological role, catalyzes the acyloin condensation reaction between C atoms 2 and 3 of pyruvate and glyceraldehyde 3-phosphate to yield 1-deoxy-D-xylulose-5-phosphate (DXP). The protein is 1-deoxy-D-xylulose-5-phosphate synthase of Synechococcus sp. (strain CC9605).